The chain runs to 520 residues: MSRHESRKLSDDYEVVDVLGKGGFSVVRRGISKSRGKNNDVAIKTLRRYGYTLPGAQRSQPGQRGLSPLGMPTLKQVSVSDALLTNEILVMRRIVEDVSPHPNVIHLHDVYEDANGVHLVLELCSGGELFDRIVAQDRYSESEAAEVVQQIASGLAALHKSTIIHRDLKPENCLFLNQEKRSTLKIMDFGLSSVEDFTDPIVALFGSIDYVSPEALSQRQVSSASDMWSLGVILYILLSGCPPFHAPSNREKQQRILAGDFSFEEHTWKTITSSAKDLISSLLSVDPYKRPTANDLLKHPWVIGDSAKQELIEPEVVSRLRSFNARRKLRAAAIASVLSSKVLLRTKKLKNLLGSHDMKSEELENLRAHFKRICANGDNATLPEFEEVLKAMKMNSLIPLAPRVFDLFDNNRDGTIDMREILCGLSNLRNSQGDDALQLCFQMYDADRSGCISKEELASMLRALPEDCVPADITEPGKLDEIFDQMDANSDGVVTFDEFKAAMQRDSSLQDVVLSSLRTI.

The 290-residue stretch at 13–302 folds into the Protein kinase domain; sequence YEVVDVLGKG…ANDLLKHPWV (290 aa). ATP is bound by residues 19–27 and K44; that span reads LGKGGFSVV. The active-site Proton acceptor is D167. The chain crosses the membrane as a helical span at residues 227 to 243; sequence MWSLGVILYILLSGCPP. Position 267 is a phosphothreonine; by autocatalysis (T267). The tract at residues 325 to 338 is calmodulin-binding; sequence ARRKLRAAAIASVL. Positions 346–368 form a coiled coil; that stretch reads TKKLKNLLGSHDMKSEELENLRA. EF-hand domains lie at 361–395, 396–431, 432–467, and 474–509; these read EELE…MKMN, SLIP…LRNS, QGDD…LPED, and TEPG…DSSL. Residues D409, N411, D413, T415, E420, D445, D447, S449, C451, E456, D487, N489, D491, and E498 each coordinate Ca(2+).

It belongs to the protein kinase superfamily. CAMK Ser/Thr protein kinase family. CaMK subfamily. Post-translationally, autophosphorylation stimulated by calcium and inhibited by calcium/calmodulin. Occurs probably by an intermolecular mechanism.

It localises to the membrane. The catalysed reaction is L-seryl-[protein] + ATP = O-phospho-L-seryl-[protein] + ADP + H(+). The enzyme catalyses L-threonyl-[protein] + ATP = O-phospho-L-threonyl-[protein] + ADP + H(+). Its activity is regulated as follows. Activated by calcium/calmodulin binding after calcium-induced autophosphorylation. Autophosphorylation is associated with a time-dependent loss of kinase activity sensitive to reaction pH and ATP concentration. In vitro inactivation leads to the formation of network-like structures. Its function is as follows. Protein kinase that may be involved in microsporogenesis. This is Calcium and calcium/calmodulin-dependent serine/threonine-protein kinase (CCAMK) from Lilium longiflorum (Trumpet lily).